The primary structure comprises 152 residues: Isoquinoline 1-oxidoreductase subunit alpha (152 aa).

The 2Fe-2S ferredoxin-type domain maps to 1 to 77 (MIEFILNGQP…RQSVTTIEGL (77 aa)). The [2Fe-2S] cluster site is built by C39, C44, and C47.

In terms of assembly, heterodimer of an alpha chain and a beta chain.

It catalyses the reaction isoquinoline + A + H2O = isoquinolin-1(2H)-one + AH2. Its function is as follows. Specific towards N-containing N-heterocyclic substrates, including isoquinoline, isoquinolin-5-ol, phthalazine and quinazoline. The polypeptide is Isoquinoline 1-oxidoreductase subunit alpha (iorA) (Brevundimonas diminuta (Pseudomonas diminuta)).